A 637-amino-acid chain; its full sequence is Protein arginine N-methyltransferase 5 (637 aa).

An N-acetylalanine modification is found at alanine 2. The tract at residues 13–292 (RVSSGRDLNC…YLEYLSQNRP (280 aa)) is TIM barrel. An SAM-dependent MTase PRMT-type domain is found at 308–615 (LQSPLQPLMD…SNSKKVWYEW (308 aa)). Residue tyrosine 324 coordinates S-adenosyl-L-methionine. Residue phenylalanine 327 coordinates a protein. Residues 333 to 334 (KY), glutamate 392, and 419 to 420 (DM) each bind S-adenosyl-L-methionine. A protein-binding residues include glutamate 435 and glutamate 444. Active-site proton donor/acceptor residues include glutamate 435 and glutamate 444. The tract at residues 465–637 (PGEYTSFLAP…PTGRSYTIGL (173 aa)) is beta barrel. The interval 488–494 (REKDRDP) is dimerization.

This sequence belongs to the class I-like SAM-binding methyltransferase superfamily. Protein arginine N-methyltransferase family. Forms, at least, homodimers and homotetramers. Component of the methylosome complex, composed of PRMT5, WDR77 and CLNS1A. Found in a complex composed of PRMT5, WDR77 and RIOK1. RIOK1 and CLNS1A associate with PRMT5 in a mutually exclusive fashion, which allows the recruitment of distinct methylation substrates, such as nucleolin/NCL and Sm proteins, respectively. Interacts with PRDM1. Identified in a complex composed of methylosome and PRMT1 and ERH. Interacts with EGFR; methylates EGFR and stimulates EGFR-mediated ERK activation. Interacts with HOXA9. Interacts with SRGAP2. Found in a complex with COPRS, RUNX1 and CBFB. Interacts with CHTOP; the interaction symmetrically methylates CHTOP, but seems to require the presence of PRMT1. Interacts with EPB41L3; this modulates methylation of target proteins. Component of a high molecular weight E2F-pocket protein complex, CERC (cyclin E1 repressor complex). Associates with SWI/SNF remodeling complexes containing SMARCA2 and SMARCA4. Interacts with JAK2, SSTR1, SUPT5H, BRAF and with active RAF1. Interacts with LSM11, PRMT7 and SNRPD3. Interacts with COPRS; promoting its recruitment on histone H4. Interacts with CLNS1A/pICln. Identified in a complex with CLNS1A/pICln and Sm proteins. Interacts with RPS10. Interacts with WDR77. Interacts with IWS1. Interacts with CRY1. Interacts with POLR2A. Interacts with SMN1/SMN2. Interacts with LYAR; this interaction is direct. Interacts with TTC5/STRAP; this interaction is DNA damage-dependent and promotes PRMT5 interaction with p53/TP53. Interacts with p53/TP53 in response to DNA damage; the interaction is TTC5/STRAP dependent. Interacts with FAM47E; the interaction is direct, promotes PRMT5 localization to chromatin, and does not disrupt its association with WDR77 or STUB1. Interacts with TDRD6. Interacts with STUB1. Interacts with MBD2. Does not interact with MBD3.

It is found in the cytoplasm. Its subcellular location is the nucleus. The protein resides in the golgi apparatus. The catalysed reaction is L-arginyl-[protein] + 2 S-adenosyl-L-methionine = N(omega),N(omega)'-dimethyl-L-arginyl-[protein] + 2 S-adenosyl-L-homocysteine + 2 H(+). With respect to regulation, activity is increased by EGF, HGF, FGF1 or FGF2 treatments, and slightly decreased by NGF treatment. Functionally, arginine methyltransferase that can both catalyze the formation of omega-N monomethylarginine (MMA) and symmetrical dimethylarginine (sDMA), with a preference for the formation of MMA. Specifically mediates the symmetrical dimethylation of arginine residues in the small nuclear ribonucleoproteins Sm D1 (SNRPD1) and Sm D3 (SNRPD3); such methylation being required for the assembly and biogenesis of snRNP core particles. Methylates SUPT5H and may regulate its transcriptional elongation properties. May methylate the N-terminal region of MBD2. Mono- and dimethylates arginine residues of myelin basic protein (MBP) in vitro. May play a role in cytokine-activated transduction pathways. Negatively regulates cyclin E1 promoter activity and cellular proliferation. Methylates histone H2A and H4 'Arg-3' during germ cell development. Methylates histone H3 'Arg-8', which may repress transcription. Methylates the Piwi proteins (PIWIL1, PIWIL2 and PIWIL4), methylation of Piwi proteins being required for the interaction with Tudor domain-containing proteins and subsequent localization to the meiotic nuage. Methylates RPS10. Attenuates EGF signaling through the MAPK1/MAPK3 pathway acting at 2 levels. First, monomethylates EGFR; this enhances EGFR 'Tyr-1197' phosphorylation and PTPN6 recruitment, eventually leading to reduced SOS1 phosphorylation. Second, methylates RAF1 and probably BRAF, hence destabilizing these 2 signaling proteins and reducing their catalytic activity. Required for induction of E-selectin and VCAM-1, on the endothelial cells surface at sites of inflammation. Methylates HOXA9. Methylates and regulates SRGAP2 which is involved in cell migration and differentiation. Acts as a transcriptional corepressor in CRY1-mediated repression of the core circadian component PER1 by regulating the H4R3 dimethylation at the PER1 promoter. Methylates GM130/GOLGA2, regulating Golgi ribbon formation. Methylates H4R3 in genes involved in glioblastomagenesis in a CHTOP- and/or TET1-dependent manner. Symmetrically methylates POLR2A, a modification that allows the recruitment to POLR2A of proteins including SMN1/SMN2 and SETX. This is required for resolving RNA-DNA hybrids created by RNA polymerase II, that form R-loop in transcription terminal regions, an important step in proper transcription termination. Along with LYAR, binds the promoter of gamma-globin HBG1/HBG2 and represses its expression. Symmetrically methylates NCL. Methylates p53/TP53; methylation might possibly affect p53/TP53 target gene specificity. Involved in spliceosome maturation and mRNA splicing in prophase I spermatocytes through the catalysis of the symmetrical arginine dimethylation of SNRPB (small nuclear ribonucleoprotein-associated protein) and the interaction with tudor domain-containing protein TDRD6. The sequence is that of Protein arginine N-methyltransferase 5 (Prmt5) from Mus musculus (Mouse).